A 352-amino-acid chain; its full sequence is Uroporphyrinogen decarboxylase (352 aa).

Substrate-binding positions include 27–31, D77, Y154, T209, and H325; that span reads RQAGR.

Belongs to the uroporphyrinogen decarboxylase family. Homodimer.

Its subcellular location is the cytoplasm. It carries out the reaction uroporphyrinogen III + 4 H(+) = coproporphyrinogen III + 4 CO2. The protein operates within porphyrin-containing compound metabolism; protoporphyrin-IX biosynthesis; coproporphyrinogen-III from 5-aminolevulinate: step 4/4. In terms of biological role, catalyzes the decarboxylation of four acetate groups of uroporphyrinogen-III to yield coproporphyrinogen-III. The sequence is that of Uroporphyrinogen decarboxylase from Legionella pneumophila subsp. pneumophila (strain Philadelphia 1 / ATCC 33152 / DSM 7513).